The chain runs to 103 residues: Large ribosomal subunit protein bL21 (103 aa).

The protein belongs to the bacterial ribosomal protein bL21 family. In terms of assembly, part of the 50S ribosomal subunit. Contacts protein L20.

Its function is as follows. This protein binds to 23S rRNA in the presence of protein L20. The sequence is that of Large ribosomal subunit protein bL21 from Brevibacillus brevis (strain 47 / JCM 6285 / NBRC 100599).